A 681-amino-acid polypeptide reads, in one-letter code: GAS2-like protein 1 (681 aa).

The residue at position 2 (Ala2) is an N-acetylalanine. The region spanning 27-148 (EAMKEDLAEW…CLLEVARRGA (122 aa)) is the Calponin-homology (CH) domain. Disordered regions lie at residues 168–204 (LRAAPPAPNAPAAGEDTTETAPAPGTPARGPRMTPSD), 278–509 (STAH…PLQL), and 536–681 (ASVT…DSWM). Residues 186–199 (ETAPAPGTPARGPR) show a composition bias toward low complexity. A Phosphothreonine modification is found at Thr193. In terms of domain architecture, GAR spans 203–275 (SDLRNLDELV…HYLDKHDPCR (73 aa)). Polar residues predominate over residues 291–303 (FSPQRVSPTTSPR). Ser306 and Ser316 each carry phosphoserine. Basic and acidic residues predominate over residues 327–342 (STKEGPETPPRPRDQL). The residue at position 334 (Thr334) is a Phosphothreonine. Residues Ser352 and Ser355 each carry the phosphoserine modification. Positions 354–365 (DSDSSASSAQSG) are enriched in low complexity. A compositionally biased stretch (basic and acidic residues) spans 370 to 381 (RSDDTGTGPRRE). Thr391 bears the Phosphothreonine mark. At Ser394 the chain carries Phosphoserine. Residues 404 to 413 (QSRDRLDRGR) show a composition bias toward basic and acidic residues. 4 positions are modified to phosphoserine: Ser436, Ser438, Ser479, and Ser486. A compositionally biased stretch (basic and acidic residues) spans 437–454 (QSREEQAVLLVRRDRDGQ). A compositionally biased stretch (low complexity) spans 475 to 493 (PRARSPAAPRLSRVSSPSP). Arg487 is modified (omega-N-methylarginine). Phosphoserine is present on residues Ser490 and Ser492. Residue Thr498 is modified to Phosphothreonine. An Omega-N-methylarginine modification is found at Arg504. A compositionally biased stretch (pro residues) spans 542–556 (GPVPDPARAPDPPAP). The span at 557-571 (DSAYCSSSSSSSSLS) shows a compositional bias: low complexity. Residue Arg633 is modified to Omega-N-methylarginine. Residues 634–644 (GRMDTQPDRKP) show a composition bias toward basic and acidic residues. A Phosphoserine modification is found at Ser657.

The protein belongs to the GAS2 family. Interacts with MAPRE1.

The protein resides in the cytoplasm. Its subcellular location is the cytoskeleton. It localises to the stress fiber. Involved in the cross-linking of microtubules and microfilaments. Regulates microtubule dynamics and stability by interacting with microtubule plus-end tracking proteins, such as MAPRE1, to regulate microtubule growth along actin stress fibers. The polypeptide is GAS2-like protein 1 (GAS2L1) (Homo sapiens (Human)).